The sequence spans 348 residues: Xaa-Pro dipeptidase (348 aa).

D209, D220, H284, E313, and E327 together coordinate Co(2+).

The protein belongs to the peptidase M24B family. Archaeal-type prolidase subfamily. Homodimer. Co(2+) serves as cofactor. Requires Mn(2+) as cofactor.

It localises to the cytoplasm. The enzyme catalyses Xaa-L-Pro dipeptide + H2O = an L-alpha-amino acid + L-proline. Functionally, splits dipeptides with a prolyl in the C-terminal position and a nonpolar amino acid at the N-terminal position. The polypeptide is Xaa-Pro dipeptidase (pepQ) (Pyrococcus furiosus (strain ATCC 43587 / DSM 3638 / JCM 8422 / Vc1)).